The following is a 338-amino-acid chain: METMRAQRLQPGVGVGGRGTLRALRPGVTGAPTSAATPPAGPPPAPPPPAPPPPPLLLAGAPGLPLPPGATGSPAVLREAVEAVVRSFAKHTQGYGRAVNVVEALQEFWQMKQSRGADLKNGALVVYEMVPSNSPPYVCYVTLPGGSCFGSFQFCPTKAEARRSAAKIALMNSVFNEHPSRRITDEFIEKSVSEALASFNGNREEADNPNTGIGAFRFMLESNKGKSMLEFQELMTVFQLLHWNGSLKAMRERQCSRQEVLAHYSHRALDDDIRHQMALDWVSREQSVPGALSRELASTERELDEARLAGKELRFHKEKKDILMLAAGQLGNMHSSSC.

The disordered stretch occupies residues 1-65 (METMRAQRLQ…LLLAGAPGLP (65 aa)). The segment covering 29–38 (TGAPTSAATP) has biased composition (low complexity). Residues 39-56 (PAGPPPAPPPPAPPPPPL) are compositionally biased toward pro residues.

It belongs to the LIX1 family.

The polypeptide is LIX1-like protein (Lix1l) (Rattus norvegicus (Rat)).